We begin with the raw amino-acid sequence, 449 residues long: NADP-specific glutamate dehydrogenase (449 aa).

Residue Lys125 is part of the active site.

It belongs to the Glu/Leu/Phe/Val dehydrogenases family. As to quaternary structure, homohexamer.

It catalyses the reaction L-glutamate + NADP(+) + H2O = 2-oxoglutarate + NH4(+) + NADPH + H(+). In Giardia intestinalis (Giardia lamblia), this protein is NADP-specific glutamate dehydrogenase.